Here is a 412-residue protein sequence, read N- to C-terminus: Multifunctional CCA protein (412 aa).

The ATP site is built by G8 and R11. Residues G8 and R11 each coordinate CTP. Residues E21 and D23 each coordinate Mg(2+). 3 residues coordinate ATP: R91, R137, and R140. The CTP site is built by R91, R137, and R140. An HD domain is found at 228-329 (CGIHTLMSLQ…WRLLQRLDVL (102 aa)).

Belongs to the tRNA nucleotidyltransferase/poly(A) polymerase family. Bacterial CCA-adding enzyme type 1 subfamily. As to quaternary structure, monomer. Can also form homodimers and oligomers. Mg(2+) serves as cofactor. Ni(2+) is required as a cofactor.

The catalysed reaction is a tRNA precursor + 2 CTP + ATP = a tRNA with a 3' CCA end + 3 diphosphate. It catalyses the reaction a tRNA with a 3' CCA end + 2 CTP + ATP = a tRNA with a 3' CCACCA end + 3 diphosphate. In terms of biological role, catalyzes the addition and repair of the essential 3'-terminal CCA sequence in tRNAs without using a nucleic acid template. Adds these three nucleotides in the order of C, C, and A to the tRNA nucleotide-73, using CTP and ATP as substrates and producing inorganic pyrophosphate. tRNA 3'-terminal CCA addition is required both for tRNA processing and repair. Also involved in tRNA surveillance by mediating tandem CCA addition to generate a CCACCA at the 3' terminus of unstable tRNAs. While stable tRNAs receive only 3'-terminal CCA, unstable tRNAs are marked with CCACCA and rapidly degraded. The polypeptide is Multifunctional CCA protein (Acinetobacter baumannii (strain AB307-0294)).